A 466-amino-acid chain; its full sequence is Polycomb group protein FIE1 (466 aa).

Positions 1–10 (MGPTSRNHKS) are enriched in basic residues. Residues 1-71 (MGPTSRNHKS…GEGEPQETVL (71 aa)) form a disordered region. The segment covering 31 to 49 (SITASASASAFASPAVANS) has biased composition (low complexity). WD repeat units follow at residues 167-209 (DMNE…IYKS), 212-252 (GHGG…LILV), 258-298 (GHRH…EYVE), 324-361 (IHSNYVDCTKWLGDFVLSKSVENEILLWESITKEENPG), 374-414 (PECN…PVLI), and 421-460 (QVKSAIRQTAVSFDGSTILACTEDGNIWRWDEVDHPTAPV).

Belongs to the WD repeat ESC family. Interacts with EZ1 and CLF. Component of the polycomb repressive complex 2 (PRC2), which methylates 'Lys-27' residues of histone H3 (H3K27me3), leading to transcriptional repression of the affected target gene. In terms of tissue distribution, expressed specifically in seed endosperm.

Its function is as follows. Polycomb group (PcG) protein. PcG proteins act by forming multiprotein complexes, which are required to maintain the transcriptionally repressive state of homeotic genes throughout development. PcG proteins are not required to initiate repression, but to maintain it during later stages of development. They act via the methylation of histones, rendering chromatin heritably changed in its expressibility. Together with EZ1 and CLF forms a complex that is involved in gene transcriptional repression by trimethylation on histone H3 'Lys-27' (H3K27me3) of target genes. Involved in the regulation of embryo and seed endosperm development. FIE1-containing PcG complex in seed endosperm regulates the expression of various transcription factors by trimethylation on histone H3 'Lys-27' (H3K27me3) of target genes. Involved in the overall expression regulation of nutrient metabolism genes, such as prolamin synthesis and seed storage protein synthesis genes. Can regulate valine, leucine and isoleucine metabolism-related genes. The protein is Polycomb group protein FIE1 of Oryza sativa subsp. japonica (Rice).